Reading from the N-terminus, the 439-residue chain is Phosphoribosylamine--glycine ligase (439 aa).

The 209-residue stretch at 109 to 317 folds into the ATP-grasp domain; it reads REFMERNKIP…LVEISERIID (209 aa). 136-195 lines the ATP pocket; it reads IDEFGKPVVVKPLGLTGGKGVKVVGYQLKDNEEAKEYAEYLIRKDGKVLIEERTDGVEFT. The Mg(2+) site is built by Gln-275, Glu-287, and Asn-289. Positions 275, 287, and 289 each coordinate Mn(2+).

Belongs to the GARS family. It depends on Mg(2+) as a cofactor. The cofactor is Mn(2+).

It catalyses the reaction 5-phospho-beta-D-ribosylamine + glycine + ATP = N(1)-(5-phospho-beta-D-ribosyl)glycinamide + ADP + phosphate + H(+). Its pathway is purine metabolism; IMP biosynthesis via de novo pathway; N(1)-(5-phospho-D-ribosyl)glycinamide from 5-phospho-alpha-D-ribose 1-diphosphate: step 2/2. The protein is Phosphoribosylamine--glycine ligase of Pyrococcus furiosus (strain ATCC 43587 / DSM 3638 / JCM 8422 / Vc1).